Consider the following 221-residue polypeptide: UPF0502 protein VSAL_II0605 (221 aa).

This sequence belongs to the UPF0502 family.

The chain is UPF0502 protein VSAL_II0605 from Aliivibrio salmonicida (strain LFI1238) (Vibrio salmonicida (strain LFI1238)).